Here is a 286-residue protein sequence, read N- to C-terminus: Shikimate dehydrogenase (NADP(+)) (286 aa).

Residues 22–24 (SRS) and threonine 71 contribute to the shikimate site. Lysine 75 (proton acceptor) is an active-site residue. Residue glutamate 87 coordinates NADP(+). Asparagine 96 and aspartate 111 together coordinate shikimate. Residues 136-140 (GAGGA), 160-165 (NRTVER), and isoleucine 225 each bind NADP(+). Residue tyrosine 227 coordinates shikimate. Residue glycine 248 participates in NADP(+) binding.

Belongs to the shikimate dehydrogenase family. In terms of assembly, homodimer.

The enzyme catalyses shikimate + NADP(+) = 3-dehydroshikimate + NADPH + H(+). It functions in the pathway metabolic intermediate biosynthesis; chorismate biosynthesis; chorismate from D-erythrose 4-phosphate and phosphoenolpyruvate: step 4/7. Its function is as follows. Involved in the biosynthesis of the chorismate, which leads to the biosynthesis of aromatic amino acids. Catalyzes the reversible NADPH linked reduction of 3-dehydroshikimate (DHSA) to yield shikimate (SA). The protein is Shikimate dehydrogenase (NADP(+)) of Rhizobium rhizogenes (strain K84 / ATCC BAA-868) (Agrobacterium radiobacter).